The following is a 288-amino-acid chain: ATP synthase gamma chain (288 aa).

Belongs to the ATPase gamma chain family. In terms of assembly, F-type ATPases have 2 components, CF(1) - the catalytic core - and CF(0) - the membrane proton channel. CF(1) has five subunits: alpha(3), beta(3), gamma(1), delta(1), epsilon(1). CF(0) has three main subunits: a, b and c.

It localises to the cell membrane. Its function is as follows. Produces ATP from ADP in the presence of a proton gradient across the membrane. The gamma chain is believed to be important in regulating ATPase activity and the flow of protons through the CF(0) complex. The sequence is that of ATP synthase gamma chain from Staphylococcus haemolyticus (strain JCSC1435).